We begin with the raw amino-acid sequence, 110 residues long: Keratin-associated protein 6-3 (110 aa).

Belongs to the KRTAP type 6 family. As to quaternary structure, interacts with hair keratins.

Its function is as follows. In the hair cortex, hair keratin intermediate filaments are embedded in an interfilamentous matrix, consisting of hair keratin-associated proteins (KRTAP), which are essential for the formation of a rigid and resistant hair shaft through their extensive disulfide bond cross-linking with abundant cysteine residues of hair keratins. The matrix proteins include the high-sulfur and high-glycine-tyrosine keratins. The polypeptide is Keratin-associated protein 6-3 (Homo sapiens (Human)).